The primary structure comprises 183 residues: SAYSvFN domain-containing protein 1 (183 aa).

Over 1–105 the chain is Cytoplasmic; sequence MEQRLAEFRA…SFLTNITFLK (105 aa). Residues 11-36 are disordered; it reads ARKRAGLAAQPPAASQGAQTPGEKAE. The span at 16 to 36 shows a compositional bias: low complexity; that stretch reads GLAAQPPAASQGAQTPGEKAE. Positions 91–105 are middle helical (MH); the sequence is SCWDQSFLTNITFLK. The segment at residues 106 to 126 is an intramembrane region (helical); sequence VLLWLVLLGLFVELEFGLAYF. Residues 127–183 are Cytoplasmic-facing; it reads VLSLFYWMYVGTRGPEEKKEGEKSAYSVFNPGCEAIQGTLTAEQLERELQLRPLAGR.

The protein belongs to the SAYSD1 family. In terms of assembly, associates (via N-terminus) with ribosomes.

The protein localises to the endoplasmic reticulum membrane. The protein resides in the cytoplasmic vesicle membrane. In terms of biological role, ufmylation 'reader' component of a translocation-associated quality control pathway, a mechanism that takes place when a ribosome has stalled during translation, and which is required to degrade clogged substrates. Specifically recognizes and binds ufmylated ribosomes when a ribosome has stalled, promoting the transport of stalled nascent chain via the TRAPP complex to lysosomes for degradation. The polypeptide is SAYSvFN domain-containing protein 1 (Homo sapiens (Human)).